The chain runs to 1019 residues: MPRSSATARKSHSNRHENGSANTGKKVAKQKSNGHLNGNLNGGSASSSLSSSQVDLPSSRSSSDPVVPTTTAASTKLNGTPDSSKGDCNAPDHLNGYAKGNADMSYVQNDGVASQTGGDVAGPASRRTEKSATGSKRSPSNASVNPLQLASTILKSCPMYDTIAILIFLLQLPPMVLTLVQFLFASLTFLPPSGASAGSLTSNFDIFQGPAGTPSLGTMIAMDGFCLLIWGLFMWTWAQNFALDLAHVQVAITLGGGGFGKNGGVNTLCVGIVLIMHLVRSKGIQDFVIGHLLSSNIISPDMLSQYSHLLPTEFRRTEPQTSPSWLRSLLAVHILAQAGTAMARRSMAKNRTPNPPRTGKRIDTEASAGSQTQIDSAFESGASVSSYIGADGQIVTSAAHKDGRDRLLSAKKRRRQANQVRSRQPFWAALASTKITVMREYEHSRALSKTARSLPMTEDDLQGLSLDDGLVWITEIDSSTIKFAAGDFSSADDSSGSGACEAGCLGSEDMEPFYVCVNGALWATATICKVHDAPKGSSMVHWRGEISGLAPNCAYTCSFVRSDTDEEICVISVKTPANNDAEQVSSVSTPPHPSYRPSSPTTTLKNSIVNAEAKLNEKRSRLRKAKNDHKLIISKIRKELDNYNHRLHSGTDENRQKQRSLQLERNIRQTEEATALLEDQLDNLENVPEEELRKWSDQKAKYEHELGLLNSAKEELASARSAIAREVSSLETELSSAIQRRERLQSRRTRINEQYERIVSANAQGLNERERRAAEQFAREQDQAKLEATFNEQFATIGQSVQEYQLRAQQIWQQCDAIEQAIQQQHQQMLLDPGPLTPEGNLPGTNPFSESALPLGALTSTAPSSRSLLGLSFPPLKSSPLQTASSPVGASSSHPTSPVQQPSYLNFPTSPLVNASSHLDSDFVYRHRSFSNRSARSSLYGSDFMDSSRRQPFQLDLSELLADKRSPGSDSNTALNSGLRPVSSPFQRAGSRGSGSGSNGSGGSGSGSGSPSSVYGKTN.

2 disordered regions span residues 1–94 (MPRS…PDHL) and 109–143 (NDGVASQTGGDVAGPASRRTEKSATGSKRSPSNAS). Positions 33 to 63 (NGHLNGNLNGGSASSSLSSSQVDLPSSRSSS) are enriched in low complexity. Composition is skewed to polar residues over residues 68–83 (PTTTAASTKLNGTPDS) and 131–143 (SATGSKRSPSNAS). 3 helical membrane-spanning segments follow: residues 163–183 (IAILIFLLQLPPMVLTLVQFL), 216–236 (LGTMIAMDGFCLLIWGLFMWT), and 259–279 (FGKNGGVNTLCVGIVLIMHLV). Disordered stretches follow at residues 343–371 (ARRSMAKNRTPNPPRTGKRIDTEASAGSQ), 580–603 (DAEQVSSVSTPPHPSYRPSSPTTT), 831–855 (LDPGPLTPEGNLPGTNPFSESALPL), 879–905 (SPLQTASSPVGASSSHPTSPVQQPSYL), and 963–1019 (DKRS…GKTN). Polar residues predominate over residues 580–589 (DAEQVSSVST). The stretch at 602–788 (TTLKNSIVNA…REQDQAKLEA (187 aa)) forms a coiled coil. Positions 992–1008 (RGSGSGSNGSGGSGSGS) are enriched in gly residues.

The protein belongs to the acrB family.

The protein resides in the membrane. Component of the regulatory network controlling carbon source utilization through ubiquitination and deubiquitination involving creA, creB, creC, creD and acrB. Involved in resistance to acriflavine, and required for normal growth on a range of sole carbon sources, including fructose, cellobiose, raffinose, and starch, and reduced utilization of amino acids, including GABA and beta-alanine, as sole carbon and nitrogen sources. This chain is Probable ubiquitination network signaling protein acrB (acrB), found in Aspergillus fumigatus (strain CBS 144.89 / FGSC A1163 / CEA10) (Neosartorya fumigata).